The sequence spans 218 residues: Small ribosomal subunit protein uS3c (218 aa).

The KH type-2 domain maps to 47-118 (VQKNMRTSSG…KLNIAVTRIA (72 aa)).

Belongs to the universal ribosomal protein uS3 family. As to quaternary structure, part of the 30S ribosomal subunit.

The protein localises to the plastid. It localises to the chloroplast. The chain is Small ribosomal subunit protein uS3c (rps3) from Solanum bulbocastanum (Wild potato).